A 531-amino-acid chain; its full sequence is MLLLNSALFILCLVCWLPGTSSSRVLTRREGPQCSRSVDVAVVGAGPSGTYSAYKLRNKGQTVELFEYSNRIGGRLFTTHLPNVPDLNLESGGMRYFKNHHKIFGVLVKELNLSNKEFTEGFGKPGRTRFFARGKSLTLEEMTSGDVPYNLSTEEKANQANLAGYYLKKLTGFDGEVLTIPQANKLEVDDGRKLYQLTVDEALDKVGTPEGKEFLKAFSTGNTEFIEGVSAVNYFLVELGEREEEILTLTDGMSALPQALADAFLKSSTSHALTLNRKLQSLSKTDNGLYLLEFLETNTHEGYTEESNITDLVCARKVILAIPQSALIHLDWKPLRSETVNEAFNAVKFIPTSKVFLTFPTAWWLSDAVKNPAFVVKSTSPFNQMYDWKSSNVTGDAAMIASYADTSDTKFQENLNSKGELIPGSAPGANRVTVALKEELLSQLSQAYGIERSDIPEPKSGTSQFWSSYPFEGDWTVWKAGYHCEYTQYIIERPSLIDDVFVVGSDHVNCIENAWTESAFLSVENVFEKYF.

The signal sequence occupies residues 1 to 22 (MLLLNSALFILCLVCWLPGTSS). Residues 23–29 (SRVLTRR) constitute a propeptide that is removed on maturation. Asparagine 112, asparagine 150, asparagine 308, and asparagine 392 each carry an N-linked (GlcNAc...) asparagine glycan.

This sequence to A.kurodai aplysianin-A. As to quaternary structure, homodimer. In terms of tissue distribution, collar tissue.

Its function is as follows. Antibacterial glycoprotein. This is Achacin from Lissachatina fulica (Giant African land snail).